The primary structure comprises 435 residues: uncharacterized protein (435 aa).

WD repeat units follow at residues 105–149, 164–204, and 207–247; these read DLEY…GIDS, HNNA…SKTQ, and AHDK…HSTI. Phosphoserine is present on Ser266. A WD 4 repeat occupies 313-353; that stretch reads GHKGDVNAVKWMPGSKSKLATCGDDCVVSLWDLDQPVNPSP. The tract at residues 352 to 371 is disordered; that stretch reads SPAPTLSVSGTTPGMTGSTS. Low complexity predominate over residues 358–371; the sequence is SVSGTTPGMTGSTS. Ser388 carries the phosphoserine modification.

It is found in the cytoplasm. It localises to the golgi apparatus. This is an uncharacterized protein from Schizosaccharomyces pombe (strain 972 / ATCC 24843) (Fission yeast).